The following is a 432-amino-acid chain: Probable exopolygalacturonase X (432 aa).

A signal peptide spans 1–23; sequence MKFSYSFVQVVSLLLSLSPSVEG. Residues Asn113, Asn129, and Asn199 are each glycosylated (N-linked (GlcNAc...) asparagine). The stretch at 231 to 252 is one PbH1 1 repeat; that stretch reads SDNIVIQNSVINNGDDCVSFKP. The active-site Proton donor is Asp245. Cys247 and Cys264 are disulfide-bonded. 2 N-linked (GlcNAc...) asparagine glycosylation sites follow: Asn253 and Asn265. 3 PbH1 repeats span residues 254-274, 285-306, and 327-348; these read STNIIVQNLHCNGSHGISVGS, VQNVLVYNISMYNASDGARIKV, and VKNITYNQMYIENVDWAIEVTQ. His268 is an active-site residue. 5 N-linked (GlcNAc...) asparagine glycosylation sites follow: Asn292, Asn297, Asn329, Asn354, and Asn364. The stretch at 362–394 is one PbH1 5 repeat; sequence PSNLTISDIHFKNFRGTTSGKRDPDVGTIVCSS. A disulfide bridge links Cys392 with Cys398.

The protein belongs to the glycosyl hydrolase 28 family.

It is found in the secreted. It catalyses the reaction [(1-&gt;4)-alpha-D-galacturonosyl](n) + H2O = alpha-D-galacturonate + [(1-&gt;4)-alpha-D-galacturonosyl](n-1). Specific in hydrolyzing the terminal glycosidic bond of polygalacturonic acid and oligogalacturonates. The chain is Probable exopolygalacturonase X (pgaX) from Neosartorya fischeri (strain ATCC 1020 / DSM 3700 / CBS 544.65 / FGSC A1164 / JCM 1740 / NRRL 181 / WB 181) (Aspergillus fischerianus).